A 620-amino-acid polypeptide reads, in one-letter code: Protein NRT1/ PTR FAMILY 2.13 (620 aa).

The tract at residues M1–P32 is disordered. The segment covering S10–S25 has biased composition (low complexity). The next 12 membrane-spanning stretches (helical) occupy residues L70–E90, A95–I115, I126–F146, K167–I187, F213–V233, W241–A261, I364–F384, I402–Y422, L443–V463, V485–G505, S524–V544, and Y568–A588.

This sequence belongs to the major facilitator superfamily. Proton-dependent oligopeptide transporter (POT/PTR) (TC 2.A.17) family. As to quaternary structure, interacts with NLA. Post-translationally, ubiquitinated by NLA. Ubiquitination of NPF2.13 leads to its degradation by the proteasome. In terms of tissue distribution, expressed in leaves and flowers. Detected in stems and siliques. Highest expression in the distal lamina of older leaves. Restricted to the sieve element and companion cell complex of the minor vein.

The protein resides in the cell membrane. Its function is as follows. Low-affinity proton-dependent nitrate transporter. Not involved in dipeptides transport, but has a weak glucosinolate transport activity. Involved in phloem loading and nitrate remobilization from the older leaves to other tissues. The protein is Protein NRT1/ PTR FAMILY 2.13 (NPF2.13) of Arabidopsis thaliana (Mouse-ear cress).